A 191-amino-acid chain; its full sequence is Adenylate kinase (191 aa).

11-16 is a binding site for ATP; it reads GSGKGT. The tract at residues 31–60 is NMP; the sequence is STGEILRREIKDKTELGKIAEEYINQGQLL. AMP-binding positions include Thr-32, Arg-37, 58 to 60, 86 to 89, and Gln-93; these read QLL and GFPR. The segment at 127-137 is LID; it reads KRGKLFSRKDD. Position 128 (Arg-128) interacts with ATP. AMP contacts are provided by Arg-134 and Arg-145. An ATP-binding site is contributed by Asn-173.

The protein belongs to the adenylate kinase family. Monomer.

It localises to the cytoplasm. The enzyme catalyses AMP + ATP = 2 ADP. It participates in purine metabolism; AMP biosynthesis via salvage pathway; AMP from ADP: step 1/1. Functionally, catalyzes the reversible transfer of the terminal phosphate group between ATP and AMP. Plays an important role in cellular energy homeostasis and in adenine nucleotide metabolism. This Azobacteroides pseudotrichonymphae genomovar. CFP2 protein is Adenylate kinase.